A 388-amino-acid polypeptide reads, in one-letter code: MNQTVDGVAPNKSGPVIEIDHVTKRFADYVAVADADFSIASGEFFSMLGPSGCGKTTTLRMIAGFETPTSGAIRLEGTDVSRVPPHKRNVNTVFQHYALFPHMSVWDNVAYGPRSMKKDKSEVKRRVDELLEVVRLTDFAKRKPGQLSGGQQQRVALARALVNYPSALLLDEPLGALDLKLRHAMQFELKRIQREVGITFIYVTHDQEEALTMSDRIAVMNAGNVEQIGTPTDIYDRPATVFVANFIGQANLWSGRQTGRLNRDYVEIDVLGSKLKARPGDTAIEAGGHATLMVRPERLRVSMEPPVGDVAAVRATVRDMTFQGPVVRLSLVAPDDSPIVAHVGTEQQLPLLRPGDEVYVCWSPDASLVLPAADIPTTEDLEEMLDES.

In terms of domain architecture, ABC transporter spans 17-247 (IEIDHVTKRF…PATVFVANFI (231 aa)). Residue 49-56 (GPSGCGKT) participates in ATP binding.

The protein belongs to the ABC transporter superfamily. Spermidine/putrescine importer (TC 3.A.1.11.1) family. As to quaternary structure, the complex is composed of two ATP-binding proteins (PotA), two transmembrane proteins (PotB and PotC) and a solute-binding protein (PotD).

Its subcellular location is the cell membrane. The enzyme catalyses ATP + H2O + polyamine-[polyamine-binding protein]Side 1 = ADP + phosphate + polyamineSide 2 + [polyamine-binding protein]Side 1.. Part of the ABC transporter complex PotABCD involved in spermidine/putrescine import. Responsible for energy coupling to the transport system. In Mycobacterium sp. (strain KMS), this protein is Spermidine/putrescine import ATP-binding protein PotA.